The chain runs to 645 residues: Rho GTPase-activating protein 25 (645 aa).

In terms of domain architecture, PH spans 46–151 (RPIKMGWLKK…WVKFLRRVAG (106 aa)). Residues 159-353 (QRLDETVAYE…MMIRDHEVLF (195 aa)) enclose the Rho-GAP domain. 2 disordered regions span residues 355 to 444 (KSKD…QTLP) and 469 to 550 (FWSP…EEEI). 2 positions are modified to phosphoserine: Ser-362 and Ser-395. Residues 393–409 (TDSFSSMTSDSDTTSPT) show a composition bias toward low complexity. Thr-406 carries the post-translational modification Phosphothreonine. Residues 420–431 (DSSKVPREKPGD) show a composition bias toward basic and acidic residues. Polar residues predominate over residues 487 to 504 (SQDLRQLSDSQRTSTYDN). Residue Ser-536 is modified to Phosphoserine. Residues 541–644 (GKKNSGEEEI…VKSMKEPKTE (104 aa)) adopt a coiled-coil conformation.

In terms of biological role, GTPase activator for the Rho-type GTPases by converting them to an inactive GDP-bound state. This is Rho GTPase-activating protein 25 (ARHGAP25) from Homo sapiens (Human).